A 21-amino-acid chain; its full sequence is Venom peptide Tv1 (21 aa).

3 disulfides stabilise this stretch: Cys4-Cys20, Cys5-Cys21, and Cys7-Cys16.

As to expression, expressed by the salivary gland. This peptide is considered as a venom peptide.

The protein localises to the secreted. In terms of biological role, injections of 20 uM of this synthetic peptide (Ile) causes partial paralysis to polychaete worms (Nereis virens), the natural prey of terebrid snails. This paralysis may be due to an inhibition of nicotinic receptors at the neuromuscular junction. In Terebra variegata (Variegate auger snail), this protein is Venom peptide Tv1.